Reading from the N-terminus, the 158-residue chain is Endoribonuclease YbeY (158 aa).

Histidine 114, histidine 118, and histidine 124 together coordinate Zn(2+).

The protein belongs to the endoribonuclease YbeY family. The cofactor is Zn(2+).

It localises to the cytoplasm. Functionally, single strand-specific metallo-endoribonuclease involved in late-stage 70S ribosome quality control and in maturation of the 3' terminus of the 16S rRNA. The protein is Endoribonuclease YbeY of Legionella pneumophila (strain Paris).